Reading from the N-terminus, the 579-residue chain is Arginine--tRNA ligase (579 aa).

A 'HIGH' region motif is present at residues 123-133 (PNLAKEMHVGH).

It belongs to the class-I aminoacyl-tRNA synthetase family. In terms of assembly, monomer.

The protein resides in the cytoplasm. It catalyses the reaction tRNA(Arg) + L-arginine + ATP = L-arginyl-tRNA(Arg) + AMP + diphosphate. The polypeptide is Arginine--tRNA ligase (Cellvibrio japonicus (strain Ueda107) (Pseudomonas fluorescens subsp. cellulosa)).